The following is a 76-amino-acid chain: NADH dehydrogenase [ubiquinone] 1 subunit C1, mitochondrial (76 aa).

Residues 1–27 constitute a mitochondrion transit peptide; it reads MAPSALLRPFWKLLAPARFPSVSSSRS. A helical membrane pass occupies residues 41-59; it reads WLKVGLTLGTSVFLWIYLI.

It belongs to the complex I NDUFC1 subunit family. As to quaternary structure, complex I is composed of 45 different subunits.

The protein resides in the mitochondrion inner membrane. Accessory subunit of the mitochondrial membrane respiratory chain NADH dehydrogenase (Complex I), that is believed not to be involved in catalysis. Complex I functions in the transfer of electrons from NADH to the respiratory chain. The immediate electron acceptor for the enzyme is believed to be ubiquinone. The chain is NADH dehydrogenase [ubiquinone] 1 subunit C1, mitochondrial (NDUFC1) from Bos taurus (Bovine).